An 862-amino-acid chain; its full sequence is Eukaryotic translation initiation factor 3 subunit C (862 aa).

The span at 1–10 shows a compositional bias: gly residues; that stretch reads MSRFFYGGGS. Residues 1–81 are disordered; it reads MSRFFYGGGS…DEEKTTVVKS (81 aa). Over residues 16-52 the composition is skewed to acidic residues; sequence SSDEEELYERDEEEQSEEEESSEEEETSEEGSDDEEG. The region spanning 601–775 is the PCI domain; that stretch reads FHMHINLELL…GAIVFRKGVE (175 aa). A disordered region spans residues 814–862; it reads RDQGAGARGGRGGGRGGHARGGARFPGQQGRRPGGQQFGGGALGGAIKA. Positions 819–833 are enriched in gly residues; that stretch reads GARGGRGGGRGGHAR. Low complexity predominate over residues 835-844; the sequence is GARFPGQQGR. Residues 845–862 are compositionally biased toward gly residues; the sequence is RPGGQQFGGGALGGAIKA.

The protein belongs to the eIF-3 subunit C family. As to quaternary structure, component of the eukaryotic translation initiation factor 3 (eIF-3) complex.

The protein resides in the cytoplasm. Component of the eukaryotic translation initiation factor 3 (eIF-3) complex, which is involved in protein synthesis of a specialized repertoire of mRNAs and, together with other initiation factors, stimulates binding of mRNA and methionyl-tRNAi to the 40S ribosome. The eIF-3 complex specifically targets and initiates translation of a subset of mRNAs involved in cell proliferation. The protein is Eukaryotic translation initiation factor 3 subunit C (nip1) of Aspergillus clavatus (strain ATCC 1007 / CBS 513.65 / DSM 816 / NCTC 3887 / NRRL 1 / QM 1276 / 107).